A 183-amino-acid chain; its full sequence is Adenine phosphoribosyltransferase (183 aa).

Belongs to the purine/pyrimidine phosphoribosyltransferase family. In terms of assembly, homodimer.

It localises to the cytoplasm. The catalysed reaction is AMP + diphosphate = 5-phospho-alpha-D-ribose 1-diphosphate + adenine. The protein operates within purine metabolism; AMP biosynthesis via salvage pathway; AMP from adenine: step 1/1. In terms of biological role, catalyzes a salvage reaction resulting in the formation of AMP, that is energically less costly than de novo synthesis. The protein is Adenine phosphoribosyltransferase of Shewanella halifaxensis (strain HAW-EB4).